A 138-amino-acid polypeptide reads, in one-letter code: Nucleoside diphosphate kinase (138 aa).

ATP-binding residues include Lys-9, Phe-57, Arg-85, Thr-91, Arg-102, and Asn-112. Residue His-120 is the Pros-phosphohistidine intermediate of the active site.

The protein belongs to the NDK family. As to quaternary structure, homotetramer. The cofactor is Mg(2+).

The protein localises to the cytoplasm. The catalysed reaction is a 2'-deoxyribonucleoside 5'-diphosphate + ATP = a 2'-deoxyribonucleoside 5'-triphosphate + ADP. It catalyses the reaction a ribonucleoside 5'-diphosphate + ATP = a ribonucleoside 5'-triphosphate + ADP. Major role in the synthesis of nucleoside triphosphates other than ATP. The ATP gamma phosphate is transferred to the NDP beta phosphate via a ping-pong mechanism, using a phosphorylated active-site intermediate. The protein is Nucleoside diphosphate kinase of Streptococcus agalactiae serotype III (strain NEM316).